Reading from the N-terminus, the 34-residue chain is Toxin Ptu1 (34 aa).

Disulfide bonds link C5–C20, C12–C26, and C19–C33.

Its subcellular location is the secreted. In terms of biological role, binds reversibly and blocks N-type voltage-gated calcium channels (Cav). The protein is Toxin Ptu1 of Peirates turpis (Assassin bug).